The chain runs to 473 residues: BPI fold-containing family B member 3 (473 aa).

Residues 1–20 (MMPGVYALLLLWGLATPCLG) form the signal peptide. Residue N139 is glycosylated (N-linked (GlcNAc...) asparagine). The cysteines at positions 161 and 196 are disulfide-linked.

This sequence belongs to the BPI/LBP/Plunc superfamily. BPI/LBP family. Highly expressed in olfactory mucosa but undetectable in thymus, kidney, lung, brain, spleen and liver.

It is found in the secreted. Its function is as follows. May have the capacity to recognize and bind specific classes of odorants. May act as a carrier molecule, transporting odorants across the mucus layer to access receptor sites. May serve as a primary defense mechanism by recognizing and removing potentially harmful odorants or pathogenic microorganisms from the mucosa or clearing excess odorant from mucus to enable new odorant stimuli to be received. This Rattus norvegicus (Rat) protein is BPI fold-containing family B member 3.